The chain runs to 615 residues: AP-1-like transcription factor yap1 (615 aa).

A compositionally biased stretch (polar residues) spans 27–50 (SSNNPTQKQQTVTHNSEANQNLNH). Disordered regions lie at residues 27–84 (SSNN…EDSP) and 99–180 (NESL…RKEK). Residues 35 to 42 (QQTVTHNS) carry the Bipartite nuclear localization signal motif. Over residues 52-67 (PGHASSGSFSVSPPSG) the composition is skewed to low complexity. The short motif at 68–75 (LDGSVNQS) is the Bipartite nuclear localization signal element. Residues 118-147 (PGDKRKDIDGQVNDKEDSGKKRRESDEKAA) are compositionally biased toward basic and acidic residues. The bZIP domain occupies 157–220 (SEPTSKRKAQ…ERLQLELKEY (64 aa)). The segment at 162–183 (KRKAQNRAAQRAFRERKEKHLK) is basic motif. Positions 185–192 (LEAKVEEL) are leucine-zipper. The transcription activation 1 stretch occupies residues 214-364 (QLELKEYRKR…RGYQVNSSYS (151 aa)). The segment covering 270–294 (LFTNTQTSKSNQNKAKDNPTATPRS) has biased composition (polar residues). The disordered stretch occupies residues 270–416 (LFTNTQTSKS…AVKATESSTP (147 aa)). Residues 289-301 (TATPRSEAQVPGV) are n-CRD. Low complexity predominate over residues 310-321 (SSPNGLSNGPSP). 2 stretches are compositionally biased toward polar residues: residues 322–344 (AKST…SGTL) and 358–369 (QVNSSYSASTKQ). The segment covering 372–394 (HDTPSSDSPSSSSDSHQSQLLSS) has biased composition (low complexity). The tract at residues 409–508 (KATESSTPHA…SQDFGTFFDD (100 aa)) is transcription activation 2. Intrachain disulfides connect cysteine 562-cysteine 586, cysteine 562-cysteine 595, and cysteine 586-cysteine 595. The segment at 562-595 (CNKIWDRLQSMEKFRNGEIDVDNLCSELRTKARC) is c-CRD. A Nuclear export signal motif is present at residues 580 to 587 (IDVDNLCS).

Belongs to the bZIP family. YAP subfamily. Post-translationally, depending on the oxidative stress inducing agent, yap1 can undergo two distinct conformational changes, both involving disulfide bond formation, and both masking the nuclear export signal, thus abolishing nuclear export.

Its subcellular location is the nucleus. The protein localises to the cytoplasm. Transcription activator involved in oxidative stress response and redox homeostasis. Regulates the transcription of genes encoding antioxidant enzymes and components of the cellular thiol-reducing pathways, including thioredoxin peroxidase (aspF3), cytochrome peroxidase, and the protein AFUA_3G00730, which appears to belong to the glutathione S-transferase family. Proteins of the protein degradation pathway are also regulated by yap1, as well the p-nitroreductase family protein AFUA_5G09910. May be involved in antifungal resistance to voriconazole. In Aspergillus fumigatus (strain ATCC MYA-4609 / CBS 101355 / FGSC A1100 / Af293) (Neosartorya fumigata), this protein is AP-1-like transcription factor yap1.